The following is a 184-amino-acid chain: Ribosome-recycling factor (184 aa).

It belongs to the RRF family.

It is found in the cytoplasm. Functionally, responsible for the release of ribosomes from messenger RNA at the termination of protein biosynthesis. May increase the efficiency of translation by recycling ribosomes from one round of translation to another. This chain is Ribosome-recycling factor, found in Caldicellulosiruptor bescii (strain ATCC BAA-1888 / DSM 6725 / KCTC 15123 / Z-1320) (Anaerocellum thermophilum).